The chain runs to 566 residues: Glutamate--tRNA ligase (566 aa).

A 'HIGH' region motif is present at residues 104–114 (PNPDGPLHLGN).

Belongs to the class-I aminoacyl-tRNA synthetase family. Glutamate--tRNA ligase type 2 subfamily.

It is found in the cytoplasm. The catalysed reaction is tRNA(Glu) + L-glutamate + ATP = L-glutamyl-tRNA(Glu) + AMP + diphosphate. Its function is as follows. Catalyzes the attachment of glutamate to tRNA(Glu) in a two-step reaction: glutamate is first activated by ATP to form Glu-AMP and then transferred to the acceptor end of tRNA(Glu). The chain is Glutamate--tRNA ligase from Metallosphaera sedula (strain ATCC 51363 / DSM 5348 / JCM 9185 / NBRC 15509 / TH2).